The primary structure comprises 871 residues: Rho guanine nucleotide exchange factor 26 (871 aa).

Disordered regions lie at residues 1–49 (MDGE…LLIT), 86–233 (AQRR…NPSV), and 288–310 (PLGHAGEESEVDNDVDSPGSLRR). Serine 22 carries the post-translational modification Phosphoserine. Positions 136 to 156 (PAPPPPPVLRPPRTPNAPAPC) are enriched in pro residues. Residues 173 to 192 (PTANGLAANNDSPGSGSQSG) are compositionally biased toward polar residues. Residue serine 392 is modified to Phosphoserine. The 185-residue stretch at 439–623 (KRQEAIFEVI…SKLVRLCNEG (185 aa)) folds into the DH domain. The PH domain occupies 655-782 (WLVKRGELTA…WITALGHSSG (128 aa)). One can recognise an SH3 domain in the interval 789–850 (TSLTQVEIVR…PMECAKEITC (62 aa)).

In terms of assembly, interacts with ICAM1 and RHOG. In terms of tissue distribution, isoform 1 is broadly expressed, with highest levels in liver (at protein level). Certain mRNA species appear to be specifically expressed in prostate and liver.

It is found in the cell projection. The protein resides in the ruffle. Functionally, activates RhoG GTPase by promoting the exchange of GDP by GTP. Required for the formation of membrane ruffles during macropinocytosis. Required for the formation of cup-like structures during trans-endothelial migration of leukocytes. In case of Salmonella enterica infection, activated by SopB, which induces cytoskeleton rearrangements and promotes bacterial entry. This Homo sapiens (Human) protein is Rho guanine nucleotide exchange factor 26 (ARHGEF26).